Reading from the N-terminus, the 518-residue chain is Protein PAC2 (518 aa).

Residues 23-67 form the CAP-Gly domain; that stretch reads VIKPWPSVKAYGVEWDDHSRGKHSGTIDDIHYFDVQIPNSGSFLK. LRR repeat units lie at residues 153–174, 179–201, 204–227, 229–252, 255–276, 277–298, 299–319, and 324–345; these read NVKD…CEFI, NLES…KEYD, HIKT…LKSF, TLKM…ENEI, TLEE…PKNL, TLKG…AIYS, VESL…DDLN, and SLKN…INVE.

The protein localises to the cytoplasm. It localises to the cytoskeleton. In terms of biological role, required for viability in the absence of the kinesin-related CIN8 mitotic motor. Seems to be involved in the assembly of alpha-tubulin. This chain is Protein PAC2 (PAC2), found in Saccharomyces cerevisiae (strain ATCC 204508 / S288c) (Baker's yeast).